The primary structure comprises 311 residues: Methionyl-tRNA formyltransferase (311 aa).

109 to 112 contacts (6S)-5,6,7,8-tetrahydrofolate; the sequence is SLLP.

The protein belongs to the Fmt family.

The enzyme catalyses L-methionyl-tRNA(fMet) + (6R)-10-formyltetrahydrofolate = N-formyl-L-methionyl-tRNA(fMet) + (6S)-5,6,7,8-tetrahydrofolate + H(+). Attaches a formyl group to the free amino group of methionyl-tRNA(fMet). The formyl group appears to play a dual role in the initiator identity of N-formylmethionyl-tRNA by promoting its recognition by IF2 and preventing the misappropriation of this tRNA by the elongation apparatus. The chain is Methionyl-tRNA formyltransferase from Solibacter usitatus (strain Ellin6076).